The sequence spans 655 residues: 1-deoxy-D-xylulose-5-phosphate synthase (655 aa).

Thiamine diphosphate contacts are provided by residues His73 and 114–116 (SHA). Asp145 is a binding site for Mg(2+). Residues 146-147 (GA), Asn174, Tyr285, and Glu367 each bind thiamine diphosphate. Asn174 provides a ligand contact to Mg(2+). The disordered stretch occupies residues 626 to 655 (RQPAIEDDPTSPGEAAPAGERAGEAIGDQR). Residues 646–655 (RAGEAIGDQR) are compositionally biased toward basic and acidic residues.

Belongs to the transketolase family. DXPS subfamily. As to quaternary structure, homodimer. It depends on Mg(2+) as a cofactor. The cofactor is thiamine diphosphate.

It catalyses the reaction D-glyceraldehyde 3-phosphate + pyruvate + H(+) = 1-deoxy-D-xylulose 5-phosphate + CO2. It participates in metabolic intermediate biosynthesis; 1-deoxy-D-xylulose 5-phosphate biosynthesis; 1-deoxy-D-xylulose 5-phosphate from D-glyceraldehyde 3-phosphate and pyruvate: step 1/1. Its function is as follows. Catalyzes the acyloin condensation reaction between C atoms 2 and 3 of pyruvate and glyceraldehyde 3-phosphate to yield 1-deoxy-D-xylulose-5-phosphate (DXP). This chain is 1-deoxy-D-xylulose-5-phosphate synthase, found in Frankia casuarinae (strain DSM 45818 / CECT 9043 / HFP020203 / CcI3).